We begin with the raw amino-acid sequence, 136 residues long: Large ribosomal subunit protein uL16 (136 aa).

Belongs to the universal ribosomal protein uL16 family. In terms of assembly, part of the 50S ribosomal subunit.

Functionally, binds 23S rRNA and is also seen to make contacts with the A and possibly P site tRNAs. The chain is Large ribosomal subunit protein uL16 from Salmonella agona (strain SL483).